Reading from the N-terminus, the 123-residue chain is Small ribosomal subunit protein uS12 (123 aa).

The residue at position 89 (D89) is a 3-methylthioaspartic acid.

Belongs to the universal ribosomal protein uS12 family. As to quaternary structure, part of the 30S ribosomal subunit. Contacts proteins S8 and S17. May interact with IF1 in the 30S initiation complex.

In terms of biological role, with S4 and S5 plays an important role in translational accuracy. Its function is as follows. Interacts with and stabilizes bases of the 16S rRNA that are involved in tRNA selection in the A site and with the mRNA backbone. Located at the interface of the 30S and 50S subunits, it traverses the body of the 30S subunit contacting proteins on the other side and probably holding the rRNA structure together. The combined cluster of proteins S8, S12 and S17 appears to hold together the shoulder and platform of the 30S subunit. In Mesorhizobium japonicum (strain LMG 29417 / CECT 9101 / MAFF 303099) (Mesorhizobium loti (strain MAFF 303099)), this protein is Small ribosomal subunit protein uS12.